Here is a 376-residue protein sequence, read N- to C-terminus: Inactive 2'-5'-oligoadenylate synthase 1B (376 aa).

The Cytoplasmic segment spans residues 1 to 351; it reads MEQDLRSIPA…VPTEVGVPMK (351 aa). The helical; Anchor for type IV membrane protein transmembrane segment at 352–370 threads the bilayer; sequence YLLCRIFWLLFWSLFHFIF. The Extracellular portion of the chain corresponds to 371 to 376; it reads GKTSSG.

The protein belongs to the 2-5A synthase family. As to quaternary structure, interacts with OSBPL1A and ABCF3. Highly expressed in lung, spleen and thymus. Also detected at lower levels in heart, kidney, liver, lung, skeletal muscle, testes, uterus and ovaries.

It is found in the endoplasmic reticulum membrane. Functionally, does not have 2'-5'-OAS activity, but can bind double-stranded RNA. The full-length protein displays antiviral activity against flaviviruses such as west Nile virus (WNV) via an alternative antiviral pathway independent of RNase L. The truncated form of the protein lacks antiviral activity. The sequence is that of Inactive 2'-5'-oligoadenylate synthase 1B (Oas1b) from Mus musculus (Mouse).